A 278-amino-acid chain; its full sequence is Trans-2,3-dihydro-3-hydroxyanthranilate isomerase (278 aa).

Residue Glu-45 is part of the active site.

The protein belongs to the PhzF family.

It carries out the reaction (5S,6S)-6-amino-5-hydroxycyclohexa-1,3-diene-1-carboxyate = (1R,6S)-6-amino-5-oxocyclohex-2-ene-1-carboxylate. It functions in the pathway secondary metabolite biosynthesis; pyocyanine biosynthesis. In terms of biological role, isomerase that catalyzes the condensation of two molecules of trans-2,3-dihydro-3-hydroxyanthranilic acid (DHHA) into the phenazine ring system. The final product is not yet known. This chain is Trans-2,3-dihydro-3-hydroxyanthranilate isomerase (phzF1), found in Pseudomonas aeruginosa (strain ATCC 15692 / DSM 22644 / CIP 104116 / JCM 14847 / LMG 12228 / 1C / PRS 101 / PAO1).